Consider the following 266-residue polypeptide: Glutathione S-transferase AN1595 (266 aa).

The GST N-terminal domain maps to 43-123 (SFGKLYTYKR…HVTNEDSTTT (81 aa)). Residues Lys93, Glu107, Cys108, and Asn143 each coordinate glutathione. A substrate-binding site is contributed by Lys93. Positions 128 to 259 (SSLDFVQIIR…VEEGLPNAPP (132 aa)) constitute a GST C-terminal domain.

The protein belongs to the GST superfamily.

The protein operates within secondary metabolite biosynthesis; terpenoid biosynthesis. In terms of biological role, glutathione S-transferase; part of the gene cluster that mediates the biosynthesis of the diterpene ent-pimara-8(14),15-diene (PD). Within the cluster, the HMG-CoA reductase AN1593 functions in the mevalonate pathway, which produces isoprenoid precursors. The geranylgeranyl pyrophosphate (GGPP) synthase AN1592 is needed in the formation of GGPP, the precursor for diterpenes. Lastly, the pimaradiene synthase pbcA performs the 2 cyclization steps that convert GGPP to ent-pimara-8(14),15-diene. The putative roles of the remaining cluster enzymes in ent-pimara-8(14),15-diene biosynthesis is unclear. The cytochrome P450 monooxygenase AN1598, the glutathione S-transferase AN1595, the oxidoreductases AN1596 and AN1597 probably function as decorative enzymes. It is possible that in biological conditions the compound is oxidized to ent-pimara-8(14),15-dien-19-oic acid, which is a bioactive diterpene compound predominant in many plant extracts. The chain is Glutathione S-transferase AN1595 from Emericella nidulans (strain FGSC A4 / ATCC 38163 / CBS 112.46 / NRRL 194 / M139) (Aspergillus nidulans).